Consider the following 107-residue polypeptide: Glutaredoxin 4 (107 aa).

Positions 4-106 (LDKIKKQISE…TLLAEVAAKH (103 aa)) constitute a Glutaredoxin domain. A glutathione-binding site is contributed by Lys-21. Position 29 (Cys-29) interacts with [2Fe-2S] cluster. Residues Arg-58, Phe-70, and 83–84 (CD) contribute to the glutathione site.

Belongs to the glutaredoxin family. Monothiol subfamily. In terms of assembly, homodimer.

The protein resides in the cytoplasm. Functionally, monothiol glutaredoxin involved in the biogenesis of iron-sulfur clusters. This Haemophilus influenzae (strain 86-028NP) protein is Glutaredoxin 4 (grxD).